A 465-amino-acid polypeptide reads, in one-letter code: Hexokinase-4 (465 aa).

In terms of domain architecture, Hexokinase spans 10 to 454 (AAKKEKVEQI…SGRGAALVSA (445 aa)). The tract at residues 67–203 (EGSEVGDFLS…DFEMDVVAMV (137 aa)) is hexokinase small subdomain. 78-83 (DLGGTN) serves as a coordination point for ATP. Residues 151–152 (SF), 168–169 (TK), and 204–205 (ND) each bind substrate. Positions 204–443 (NDTVATMISC…CEITFIESEE (240 aa)) are hexokinase large subdomain. T228 is an ATP binding site. Substrate-binding residues include N231, E256, and E290. Residues 295–296 (GK), 332–336 (TRFVS), and 411–415 (SVYKL) each bind ATP.

It belongs to the hexokinase family. Monomer. Interacts with MIDN; the interaction occurs preferentially at low glucose levels and results in inhibition of hexokinase activity. Interacts with GCKR; leading to sequestration in the nucleus.

Its subcellular location is the cytoplasm. It localises to the nucleus. The protein resides in the mitochondrion. It catalyses the reaction a D-hexose + ATP = a D-hexose 6-phosphate + ADP + H(+). It carries out the reaction D-fructose + ATP = D-fructose 6-phosphate + ADP + H(+). The enzyme catalyses D-glucose + ATP = D-glucose 6-phosphate + ADP + H(+). The catalysed reaction is D-mannose + ATP = D-mannose 6-phosphate + ADP + H(+). It functions in the pathway carbohydrate metabolism; hexose metabolism. Its pathway is carbohydrate degradation; glycolysis; D-glyceraldehyde 3-phosphate and glycerone phosphate from D-glucose: step 1/4. Subject to allosteric regulation. Low glucose and high fructose-6-phosphate triggers association with the inhibitor GCKR followed by sequestration in the nucleus. Catalyzes the phosphorylation of hexose, such as D-glucose, D-fructose and D-mannose, to hexose 6-phosphate (D-glucose 6-phosphate, D-fructose 6-phosphate and D-mannose 6-phosphate, respectively). Compared to other hexokinases, has a weak affinity for D-glucose, and is effective only when glucose is abundant. Mainly expressed in pancreatic beta cells and the liver and constitutes a rate-limiting step in glucose metabolism in these tissues. Since insulin secretion parallels glucose metabolism and the low glucose affinity of GCK ensures that it can change its enzymatic activity within the physiological range of glucose concentrations, GCK acts as a glucose sensor in the pancreatic beta cell. In pancreas, plays an important role in modulating insulin secretion. In liver, helps to facilitate the uptake and conversion of glucose by acting as an insulin-sensitive determinant of hepatic glucose usage. Required to provide D-glucose 6-phosphate for the synthesis of glycogen. Mediates the initial step of glycolysis by catalyzing phosphorylation of D-glucose to D-glucose 6-phosphate. This Homo sapiens (Human) protein is Hexokinase-4.